The chain runs to 671 residues: cGMP-dependent protein kinase 1 (671 aa).

Ser-2 bears the N-acetylserine mark. Residues 2-59 (SELEEDFAKILMLKEERIKELEKRLSEKEEEIQELKRKLHKCQSVLPVPSTHIGPRTT) adopt a coiled-coil conformation. The segment at 2–102 (SELEEDFAKI…LIKEAILDND (101 aa)) is required for dimerization. Residues 9-44 (AKILMLKEERIKELEKRLSEKEEEIQELKRKLHKCQ) are leucine-zipper. Positions 50–75 (PSTHIGPRTTRAQGISAEPQTYRSFH) are autoinhibitory domain. The residue at position 59 (Thr-59) is a Phosphothreonine; by autocatalysis. The segment at 103–220 (FMKNLELSQI…EYMEFLKSVP (118 aa)) is cGMP-binding, high affinity. 3',5'-cyclic AMP contacts are provided by residues 167–170 (GELA) and 177–178 (RT). Residues 167 to 170 (GELA), 177 to 178 (RT), Arg-282, 291 to 294 (GEKA), 301 to 302 (RT), and Tyr-336 contribute to the 3',5'-cyclic GMP site. The tract at residues 221–341 (TFQSLPEEIL…SNKAYEDAEA (121 aa)) is cGMP-binding, low affinity. Residues 360–619 (FNIIDTLGVG…VKDIQKHKWF (260 aa)) form the Protein kinase domain. Residues 366-374 (LGVGGFGRV) and Lys-390 contribute to the ATP site. Asp-484 acts as the Proton acceptor in catalysis. At Thr-515 the chain carries Phosphothreonine. An AGC-kinase C-terminal domain is found at 620–671 (EGFNWEGLRKGTLTPPIIPSVASPTDTSNFDSFPEDNDEPPPDDNSGWDIDF). The interval 635-671 (PIIPSVASPTDTSNFDSFPEDNDEPPPDDNSGWDIDF) is disordered. Acidic residues predominate over residues 652–661 (FPEDNDEPPP).

The protein belongs to the protein kinase superfamily. AGC Ser/Thr protein kinase family. cGMP subfamily. Isoform alpha: parallel homodimer or heterodimer and also heterotetramer. Interacts directly with PPP1R12A. Non-covalent dimer of dimer of PRKG1-PRKG1 and PPP1R12A-PPP1R12A. This interaction targets PRKG1 to stress fibers to mediate smooth muscle cell relaxation and vasodilation in responses to rises in cGMP. Isoform beta: antiparallel homodimer. Part of cGMP kinase signaling complex at least composed of ACTA2/alpha-actin, CNN1/calponin H1, PLN/phospholamban, PRKG1 and ITPR1. Interacts with IRAG1. Forms a stable complex with ITPR1, IRAG1, and isoform beta of PRKG1. Interacts with TRPC7 (via ankyrin repeat domain). Isoform alpha interacts with RGS2. Interacts with GTF2I. Post-translationally, autophosphorylation increases kinase activity. In terms of processing, 65 kDa monomer is produced by proteolytic cleavage. High concentrations are detected in various smooth muscle: lung, rumen, trachea, aorta, uterus and stomach. Isoform alpha is expressed predominantly in heart, cerebellum and lung, whereas the beta isoform is expressed in high concentrations in trachea, aorta, stomach and uterus.

The protein localises to the cytoplasm. It carries out the reaction L-seryl-[protein] + ATP = O-phospho-L-seryl-[protein] + ADP + H(+). It catalyses the reaction L-threonyl-[protein] + ATP = O-phospho-L-threonyl-[protein] + ADP + H(+). With respect to regulation, in the absence of cGMP, PRKG1 activity is suppressed by autoinhibitory contacts. Serine/threonine protein kinase that acts as a key mediator of the nitric oxide (NO)/cGMP signaling pathway. GMP binding activates PRKG1, which phosphorylates serines and threonines on many cellular proteins. Numerous protein targets for PRKG1 phosphorylation are implicated in modulating cellular calcium, but the contribution of each of these targets may vary substantially among cell types. Proteins that are phosphorylated by PRKG1 regulate platelet activation and adhesion, smooth muscle contraction, cardiac function, gene expression, feedback of the NO-signaling pathway, and other processes involved in several aspects of the CNS like axon guidance, hippocampal and cerebellar learning, circadian rhythm and nociception. Smooth muscle relaxation is mediated through lowering of intracellular free calcium, by desensitization of contractile proteins to calcium, and by decrease in the contractile state of smooth muscle or in platelet activation. Regulates intracellular calcium levels via several pathways: phosphorylates IRAG1 and inhibits IP3-induced Ca(2+) release from intracellular stores, phosphorylation of KCNMA1 (BKCa) channels decreases intracellular Ca(2+) levels, which leads to increased opening of this channel. PRKG1 phosphorylates the canonical transient receptor potential channel (TRPC) family which inactivates the associated inward calcium current. Another mode of action of NO/cGMP/PKGI signaling involves PKGI-mediated inactivation of the Ras homolog gene family member A (RhoA). Phosphorylation of RHOA by PRKG1 blocks the action of this protein in myriad processes: regulation of RHOA translocation; decreasing contraction; controlling vesicle trafficking, reduction of myosin light chain phosphorylation resulting in vasorelaxation. Activation of PRKG1 by NO signaling also alters gene expression in a number of tissues. In smooth muscle cells, increased cGMP and PRKG1 activity influence expression of smooth muscle-specific contractile proteins, levels of proteins in the NO/cGMP signaling pathway, down-regulation of the matrix proteins osteopontin and thrombospondin-1 to limit smooth muscle cell migration and phenotype. Regulates vasodilator-stimulated phosphoprotein (VASP) functions in platelets and smooth muscle. The protein is cGMP-dependent protein kinase 1 (PRKG1) of Bos taurus (Bovine).